The sequence spans 382 residues: Neuropeptide Y receptor type 1 (382 aa).

Residues 1–33 lie on the Extracellular side of the membrane; that stretch reads MNSTSFSQVENHSIFCNFSENSQFLAFESDDCH. N-linked (GlcNAc...) asparagine glycosylation is found at Asn-2, Asn-11, and Asn-17. A helical membrane pass occupies residues 34–54; that stretch reads LPLAMIFTLALAYGAVIILGV. Residues 55-75 lie on the Cytoplasmic side of the membrane; the sequence is TGNLALIMIILKQKEMRNVTN. A helical membrane pass occupies residues 76-96; it reads ILIVNLSFSDLLVAIMCLPFT. The Extracellular portion of the chain corresponds to 97–115; sequence FVYTLMDHWVFGEAMCKLN. A disulfide bridge links Cys-112 with Cys-197. Residues 116–136 form a helical membrane-spanning segment; that stretch reads PFVQCVSITVSIFSLVLIAVE. Residues 137-153 are Cytoplasmic-facing; the sequence is RHQLIINPRGWRPNNRH. Residues 154 to 174 form a helical membrane-spanning segment; the sequence is AYVGIAVIWVLAVVSSLPFLI. Topologically, residues 175-210 are extracellular; it reads YQVLTDEPFQNVTLDAFKDKYVCFDKFPSDSHRLSY. Asn-185 is a glycosylation site (N-linked (GlcNAc...) asparagine). The chain crosses the membrane as a helical span at residues 211–231; that stretch reads TTLLLMLQYFGPLCFIFICYF. Residues 232-259 lie on the Cytoplasmic side of the membrane; it reads KIYIRLKRRNNMMDKMRDNKYRSSETKR. Residues 260–280 form a helical membrane-spanning segment; the sequence is INIMLLSIVVAFAVCWLPLTI. The Extracellular segment spans residues 281 to 298; that stretch reads FNTVFDWNHQIIATCNHN. Residues 299–319 traverse the membrane as a helical segment; sequence LLFLLCHLTAMISTCVNPIFY. Topologically, residues 320-382 are cytoplasmic; sequence GFLNKNFQRD…KINNDDNEKI (63 aa). Residue Cys-337 is the site of S-palmitoyl cysteine attachment. At Ser-367 the chain carries Phosphoserine.

Belongs to the G-protein coupled receptor 1 family.

Its subcellular location is the cell membrane. Its function is as follows. Receptor for neuropeptide Y and peptide YY. This is Neuropeptide Y receptor type 1 (NPY1R) from Canis lupus familiaris (Dog).